A 547-amino-acid chain; its full sequence is uncharacterized protein (547 aa).

The span at methionine 1–serine 18 shows a compositional bias: polar residues. Disordered stretches follow at residues methionine 1–proline 41 and proline 80–glutamine 165. 2 stretches are compositionally biased toward low complexity: residues glutamine 19 to glutamine 29 and proline 83 to tyrosine 94. Pro residues predominate over residues valine 121–proline 135. A compositionally biased stretch (polar residues) spans lysine 136–glycine 160. A DNA-binding region (zn(2)-C6 fungal-type) is located at residues cysteine 174–cysteine 201.

It localises to the nucleus. This is an uncharacterized protein from Schizosaccharomyces pombe (strain 972 / ATCC 24843) (Fission yeast).